Consider the following 1343-residue polypeptide: uncharacterized protein (1343 aa).

Residues 432-449 form a helical membrane-spanning segment; sequence LYVYFVTTKTGVVAFSLL.

The protein belongs to the IIV-6 295L family.

It is found in the membrane. This is an uncharacterized protein from Acheta domesticus (House cricket).